The sequence spans 424 residues: Microcin H47 secretion protein MchE (424 aa).

Topologically, residues 1–25 (MFRQDALENRKMKWQGRAILLPGIP) are cytoplasmic. Residues 26–46 (LWLIMLGSIVFITAFLMFIIV) traverse the membrane as a helical segment. The Periplasmic segment spans residues 47-424 (GTYSRRVNVS…KHSATGPLND (378 aa)).

This sequence belongs to the membrane fusion protein (MFP) (TC 8.A.1) family.

Its subcellular location is the cell inner membrane. In terms of biological role, probably involved, in conjunction with MchF, in the secretion of microcin H47. The polypeptide is Microcin H47 secretion protein MchE (mchE) (Escherichia coli).